A 360-amino-acid polypeptide reads, in one-letter code: Nicotinate-nucleotide--dimethylbenzimidazole phosphoribosyltransferase (360 aa).

The active-site Proton acceptor is E327.

The protein belongs to the CobT family.

It catalyses the reaction 5,6-dimethylbenzimidazole + nicotinate beta-D-ribonucleotide = alpha-ribazole 5'-phosphate + nicotinate + H(+). Its pathway is nucleoside biosynthesis; alpha-ribazole biosynthesis; alpha-ribazole from 5,6-dimethylbenzimidazole: step 1/2. Functionally, catalyzes the synthesis of alpha-ribazole-5'-phosphate from nicotinate mononucleotide (NAMN) and 5,6-dimethylbenzimidazole (DMB). The chain is Nicotinate-nucleotide--dimethylbenzimidazole phosphoribosyltransferase from Shewanella baltica (strain OS155 / ATCC BAA-1091).